Reading from the N-terminus, the 635-residue chain is Threonine--tRNA ligase (635 aa).

Positions 1–61 constitute a TGS domain; the sequence is MIAITLPDGS…EQNVDLAIVT (61 aa). Residues 242-533 form a catalytic region; that stretch reads DHRKLGKLLD…LLENHAGALP (292 aa). Positions 333, 384, and 510 each coordinate Zn(2+).

Belongs to the class-II aminoacyl-tRNA synthetase family. As to quaternary structure, homodimer. Zn(2+) serves as cofactor.

It localises to the cytoplasm. It catalyses the reaction tRNA(Thr) + L-threonine + ATP = L-threonyl-tRNA(Thr) + AMP + diphosphate + H(+). In terms of biological role, catalyzes the attachment of threonine to tRNA(Thr) in a two-step reaction: L-threonine is first activated by ATP to form Thr-AMP and then transferred to the acceptor end of tRNA(Thr). Also edits incorrectly charged L-seryl-tRNA(Thr). This chain is Threonine--tRNA ligase, found in Ralstonia nicotianae (strain ATCC BAA-1114 / GMI1000) (Ralstonia solanacearum).